The sequence spans 1887 residues: Fatty acid synthase subunit alpha (1887 aa).

A Glycyl lysine isopeptide (Lys-Gly) (interchain with G-Cter in ubiquitin) cross-link involves residue Lys37. At Ser50 the chain carries Phosphoserine. A disordered region spans residues 96–120 (ELAAKEEPAKEEAPAPTPAASAPAP). Residues 98 to 108 (AAKEEPAKEEA) are compositionally biased toward basic and acidic residues. Residues 145–220 (VKASLLLHVL…ETFQDTFSGA (76 aa)) enclose the Carrier domain. An O-(pantetheine 4'-phosphoryl)serine modification is found at Ser180. Ser523 carries the post-translational modification Phosphoserine. Residues 675–874 (DKYVLITGAG…CGAIIGWTRG (200 aa)) are beta-ketoacyl reductase. Ser958 is modified (phosphoserine). Positions 1123–1657 (QEVIVEEDLE…QKGGQAIVVH (535 aa)) constitute a Ketosynthase family 3 (KS3) domain. Cys1305 serves as the catalytic For beta-ketoacyl synthase activity. Ser1440 is subject to Phosphoserine. Active-site for beta-ketoacyl synthase activity residues include His1542 and His1583. Positions 1772, 1773, and 1774 each coordinate Mg(2+). Acetyl-CoA contacts are provided by residues 1772-1774 (DVE), Tyr1798, Ser1808, 1817-1827 (EAVFKSLGVKS), 1841-1844 (RVNK), and 1871-1873 (ISH). 2 residues coordinate Mg(2+): Ser1872 and His1873.

It belongs to the thiolase-like superfamily. Fungal fatty acid synthetase subunit alpha family. In terms of assembly, [Alpha(6)beta(6)] hexamers of two multifunctional subunits (alpha and beta). In terms of processing, 4'-phosphopantetheine is transferred from CoA to a specific serine of the Acyl carrier domain by the C-terminal PPT domain. This modification is essential for activity because fatty acids are bound in thioester linkage to the sulfhydryl of the prosthetic group.

The catalysed reaction is acetyl-CoA + n malonyl-CoA + 2n NADPH + 4n H(+) = a long-chain-acyl-CoA + n CoA + n CO2 + 2n NADP(+).. The enzyme catalyses a fatty acyl-[ACP] + malonyl-[ACP] + H(+) = a 3-oxoacyl-[ACP] + holo-[ACP] + CO2. It carries out the reaction a (3R)-hydroxyacyl-[ACP] + NADP(+) = a 3-oxoacyl-[ACP] + NADPH + H(+). Its activity is regulated as follows. Inhibited by cerulenin by covalent binding to active site of the ketoacyl synthase (KS) region. In terms of biological role, fatty acid synthetase catalyzes the formation of long-chain fatty acids from acetyl-CoA, malonyl-CoA and NADPH. The alpha subunit contains domains for: acyl carrier protein, 3-oxoacyl-[acyl-carrier-protein] reductase, and 3-oxoacyl-[acyl-carrier-protein] synthase. This subunit coordinates the binding of the six beta subunits to the enzyme complex. The sequence is that of Fatty acid synthase subunit alpha (FAS2) from Saccharomyces cerevisiae (strain ATCC 204508 / S288c) (Baker's yeast).